A 369-amino-acid polypeptide reads, in one-letter code: MKNAYYIGLMSGTSMDGVDAVLVDFSGAQPQLITSHTEAIPSHLLKGLQRLCSPSTDEINRLGRLDRNVGELFALAVNNLLTKCAIAKEDVIAIGSHGQTVRHMPNLEVGFTLQIGDPNTIATETGIDVIADFRRKDIALGGQGAPLVPAFHQQTFAEVGKKRIILNIGGIANITYLPGNSDQVLGFDTGPGNTLIDAWIQQVKSEPFDRDGAWAESGKTDQDLLTQLLSHPYFSLAYPKSTGRELFNQAWLEQQLSPFNHLDEEDIQSTLLDLTCHSIARDMIKLSNEGELYVCGGGAFNGQLMQRLAALLPGYTLNTTSALGVDPKWAEGIAFAWLAMRNHLGLPANLPAVTGASREAVLGGRFSAK.

Residue 12–19 (GTSMDGVD) coordinates ATP.

Belongs to the anhydro-N-acetylmuramic acid kinase family.

It carries out the reaction 1,6-anhydro-N-acetyl-beta-muramate + ATP + H2O = N-acetyl-D-muramate 6-phosphate + ADP + H(+). It participates in amino-sugar metabolism; 1,6-anhydro-N-acetylmuramate degradation. Its pathway is cell wall biogenesis; peptidoglycan recycling. Catalyzes the specific phosphorylation of 1,6-anhydro-N-acetylmuramic acid (anhMurNAc) with the simultaneous cleavage of the 1,6-anhydro ring, generating MurNAc-6-P. Is required for the utilization of anhMurNAc either imported from the medium or derived from its own cell wall murein, and thus plays a role in cell wall recycling. This chain is Anhydro-N-acetylmuramic acid kinase, found in Shewanella baltica (strain OS155 / ATCC BAA-1091).